The chain runs to 119 residues: Protein TusC (119 aa).

It belongs to the DsrF/TusC family. Heterohexamer, formed by a dimer of trimers. The hexameric TusBCD complex contains 2 copies each of TusB, TusC and TusD. The TusBCD complex interacts with TusE.

It localises to the cytoplasm. In terms of biological role, part of a sulfur-relay system required for 2-thiolation of 5-methylaminomethyl-2-thiouridine (mnm(5)s(2)U) at tRNA wobble positions. The protein is Protein TusC of Buchnera aphidicola subsp. Schizaphis graminum (strain Sg).